The sequence spans 215 residues: Methylosome subunit pICln (215 aa).

Disordered regions lie at residues 88-120 and 160-215; these read GDPPQQAVNGRNGGGSEAEVDEGNGSDEHDEDD and HPDS…DADE. 3 stretches are compositionally biased toward acidic residues: residues 105 to 120, 167 to 190, and 203 to 215; these read AEVDEGNGSDEHDEDD, DSEDSDPMQDAGGLEDEAMEEDDA, and LDDDEERFEDADE.

This sequence belongs to the pICln (TC 1.A.47) family. Component of the methylosome, a 20S complex containing at least CLNS1A/pICln, PRMT5/SKB1 and WDR77/MEP50; may mediate SNRPD1 and SNRPD3 methylation. Forms a 6S pICln-Sm complex composed of CLNS1A/pICln, SNRPD1, SNRPD2, SNRPE, SNRPF and SNRPG; ring-like structure where CLNS1A/pICln mimics additional Sm proteins and which is unable to assemble into the core snRNP.

The protein resides in the cytoplasm. It is found in the cytosol. It localises to the nucleus. The protein localises to the cytoskeleton. Its function is as follows. Involved in both the assembly of spliceosomal snRNPs and the methylation of Sm proteins. Chaperone that regulates the assembly of spliceosomal U1, U2, U4 and U5 small nuclear ribonucleoproteins (snRNPs), the building blocks of the spliceosome, and thereby plays an important role in the splicing of cellular pre-mRNAs. Most spliceosomal snRNPs contain a common set of Sm proteins SNRPB, SNRPD1, SNRPD2, SNRPD3, SNRPE, SNRPF and SNRPG that assemble in a heptameric protein ring on the Sm site of the small nuclear RNA to form the core snRNP (Sm core). In the cytosol, the Sm proteins SNRPD1, SNRPD2, SNRPE, SNRPF and SNRPG are trapped in an inactive 6S pICln-Sm complex by the chaperone CLNS1A that controls the assembly of the core snRNP. Dissociation by the SMN complex of CLNS1A from the trapped Sm proteins and their transfer to an SMN-Sm complex triggers the assembly of core snRNPs and their transport to the nucleus. This is Methylosome subunit pICln (icln) from Drosophila melanogaster (Fruit fly).